Here is a 449-residue protein sequence, read N- to C-terminus: MLRLWPGGAPGGLASILLRISLRLALWLPPLTLGSALAEGPGELYVPQHMPHHLVPAARSHAPLRAGHAGTTYIFGRDGGLIVYTWPPNDRPSTRADRLAVGFSTQQKDAVLVRVDSSSGLGDYLQLQIERGNIKVVFNVGTDDINIEETSKFVNDGKYHIVRFTRSGGNATLQVDDLPVIERYPSGNIDNERLAIARQRIPYRLGRVVDDWLLDKGRQLTIFNSQTTIKIGGWEKGSRPFQGQLSGLYYNGLKVLNMAAEGDPNVRVEGSARLVGDMPSSSITPQSSVSAAGNRSETSPSITDITTTTASNRQGKQTTTPQDDLLVASAECPSDDEDIDPCDPSSGGLAHPPLPEAKGYPSPEVIRESSSTTGMVVGIVAAAALCILILLYAMYKYRNRDEGSYHVDESRNYISNSATQPNGAAVKEKPIGVPKNKKDKKNKDKEYYV.

A signal peptide spans 1-38 (MLRLWPGGAPGGLASILLRISLRLALWLPPLTLGSALA). At 39–373 (EGPGELYVPQ…EVIRESSSTT (335 aa)) the chain is on the extracellular side. The Laminin G-like domain occupies 71 to 272 (TTYIFGRDGG…DPNVRVEGSA (202 aa)). Residues 276–366 (GDMPSSSITP…AKGYPSPEVI (91 aa)) are disordered. A compositionally biased stretch (low complexity) spans 280–311 (SSSITPQSSVSAAGNRSETSPSITDITTTTAS). The segment covering 312–322 (NRQGKQTTTPQ) has biased composition (polar residues). The helical transmembrane segment at 374–394 (GMVVGIVAAAALCILILLYAM) threads the bilayer. At 395–449 (YKYRNRDEGSYHVDESRNYISNSATQPNGAAVKEKPIGVPKNKKDKKNKDKEYYV) the chain is on the cytoplasmic side. Residues 415 to 449 (SNSATQPNGAAVKEKPIGVPKNKKDKKNKDKEYYV) form a disordered region.

Belongs to the neurexin family.

It localises to the membrane. Neuronal cell surface protein that may be involved in cell recognition and cell adhesion. May play a role in formation or maintenance of synaptic junctions. This is Neurexin-1a-beta (nrxn1a) from Danio rerio (Zebrafish).